The sequence spans 541 residues: Atlastin-3 (541 aa).

The interval 1–25 is N-terminal hypervariable region (HVR); that stretch reads MLSPQRVAAAASRGADDAMESSKPG. Residues 1–445 are Cytoplasmic-facing; sequence MLSPQRVAAA…NVFSTFRTPA (445 aa). Positions 57 to 305 constitute a GB1/RHD3-type G domain; it reads DLDVVVVSVA…LIPYVLNPSK (249 aa). Residues Arg70, Lys71, Gly72, Lys73, Ser74, Phe75, and Arg109 each contribute to the GDP site. Asp142 lines the Mg(2+) pocket. 4 residues coordinate GDP: Arg213, Asp214, Val272, and Ser275. Residues 343–434 form a 3HB (three-helix bundle) domain region; that stretch reads MLQATAEANN…YENFCKHNGS (92 aa). Lys391 bears the N6-acetyllysine mark. The helical transmembrane segment at 446–466 threads the bilayer; the sequence is VLFTGIVALYIASGLTGFIGL. Residue Glu467 is a topological domain, lumenal. Residues 468–488 form a helical membrane-spanning segment; sequence VVAQLFNCMVGLLLIALLTWG. At 489–541 the chain is on the cytoplasmic side; it reads YIRYSGQYRELGGAIDFGAAYVLEQASSHIGNSTQATVRDAVVGRPSMDKKAQ. Ser535 carries the phosphoserine modification.

The protein belongs to the TRAFAC class dynamin-like GTPase superfamily. GB1/RHD3 GTPase family. GB1 subfamily. As to quaternary structure, monomeric and homodimeric. The homodimer, transiently formed by two molecules on opposing membranes, is the active form mediating ER membrane fusion. Interacts with ZFYVE27; both proteins are involved in endoplasmic reticulum tubular network organization. Interacts with REEP5; both proteins are involved in endoplasmic reticulum tubular network organization. Expressed in the central nervous system and in dorsal root ganglia neurons. Expressed in peripheral tissues (at protein level).

The protein resides in the endoplasmic reticulum membrane. It catalyses the reaction GTP + H2O = GDP + phosphate + H(+). In terms of biological role, atlastin-3 (ATL3) is a membrane-anchored GTPase that mediates the GTP-dependent fusion of endoplasmic reticulum (ER) membranes, maintaining the continuous ER network. It facilitates the formation of three-way junctions where ER tubules intersect. Two atlastin-3 on neighboring ER tubules bind GTP and form loose homodimers through the GB1/RHD3-type G domains and 3HB regions. Upon GTP hydrolysis, the 3HB regions tighten, pulling the membranes together to drive their fusion. After fusion, the homodimer disassembles upon release of inorganic phosphate (Pi). Subsequently, GDP dissociates, resetting the monomers to a conformation ready for a new fusion cycle. The protein is Atlastin-3 of Homo sapiens (Human).